Here is a 160-residue protein sequence, read N- to C-terminus: Cytochrome b6-f complex subunit 4 (160 aa).

3 helical membrane-spanning segments follow: residues 36-56 (LLYIFPVVILGTIACNVGLAV), 95-115 (LLGVLLMVSVPTGLLTVPFLE), and 131-151 (TVFLIGTVVALWLGIGATLPI).

This sequence belongs to the cytochrome b family. PetD subfamily. As to quaternary structure, the 4 large subunits of the cytochrome b6-f complex are cytochrome b6, subunit IV (17 kDa polypeptide, petD), cytochrome f and the Rieske protein, while the 4 small subunits are petG, petL, petM and petN. The complex functions as a dimer.

The protein localises to the plastid. The protein resides in the chloroplast thylakoid membrane. Its function is as follows. Component of the cytochrome b6-f complex, which mediates electron transfer between photosystem II (PSII) and photosystem I (PSI), cyclic electron flow around PSI, and state transitions. The protein is Cytochrome b6-f complex subunit 4 of Sorghum bicolor (Sorghum).